We begin with the raw amino-acid sequence, 142 residues long: NADH-quinone oxidoreductase subunit A (142 aa).

Helical transmembrane passes span 8–28 (FGTV…GYLT), 63–83 (FYVV…LFPW), and 93–113 (FALI…VYAW).

The protein belongs to the complex I subunit 3 family. In terms of assembly, NDH-1 is composed of 14 different subunits. Subunits NuoA, H, J, K, L, M, N constitute the membrane sector of the complex.

The protein resides in the cell inner membrane. It carries out the reaction a quinone + NADH + 5 H(+)(in) = a quinol + NAD(+) + 4 H(+)(out). In terms of biological role, NDH-1 shuttles electrons from NADH, via FMN and iron-sulfur (Fe-S) centers, to quinones in the respiratory chain. The immediate electron acceptor for the enzyme in this species is believed to be a menaquinone. Couples the redox reaction to proton translocation (for every two electrons transferred, four hydrogen ions are translocated across the cytoplasmic membrane), and thus conserves the redox energy in a proton gradient. The sequence is that of NADH-quinone oxidoreductase subunit A from Chlorobium phaeobacteroides (strain BS1).